Here is an 810-residue protein sequence, read N- to C-terminus: Phospholipase D alpha 1 (810 aa).

Residues 1-36 (MAQHLLHGTLHATIYEVDDLHTGGLRSGFFGKILAN) constitute a propeptide that is removed on maturation. The C2 domain maps to 1–126 (MAQHLLHGTL…IHGEEVDQWV (126 aa)). D187 contacts Ca(2+). The 40-residue stretch at 327 to 366 (AMFTHHQKIVVVDSEMPSRGGSQMRRIVSFVGGIDLCDGR) folds into the PLD phosphodiesterase 1 domain. Residues H332, K334, and D339 contribute to the active site. H332 contributes to the a 1,2-diacyl-sn-glycero-3-phosphate binding site. Ca(2+)-binding residues include H372 and H406. Positions 522 and 661 each coordinate a 1,2-diacyl-sn-glycero-3-phosphate. Residues 656–683 (FMIYVHTKMMIVDDEYIIIGSANINQRS) enclose the PLD phosphodiesterase 2 domain. Residues H661, K663, and D668 contribute to the active site. A Ca(2+)-binding site is contributed by E722.

It belongs to the phospholipase D family. C2-PLD subfamily. It depends on Ca(2+) as a cofactor.

Its subcellular location is the cytoplasm. It localises to the membrane. It carries out the reaction a 1,2-diacyl-sn-glycero-3-phosphocholine + H2O = a 1,2-diacyl-sn-glycero-3-phosphate + choline + H(+). Functionally, hydrolyzes glycerol-phospholipids at the terminal phosphodiesteric bond. Plays an important role in various cellular processes, including phytohormone action, vesicular trafficking, secretion, cytoskeletal arrangement, meiosis, tumor promotion, pathogenesis, membrane deterioration and senescence. The protein is Phospholipase D alpha 1 (PLD1) of Brassica oleracea var. capitata (Cabbage).